Consider the following 355-residue polypeptide: DNA polymerase IV (355 aa).

The UmuC domain maps to 4–185 (IIHVDMDCFY…LPLKKIPGVG (182 aa)). Mg(2+)-binding residues include aspartate 8 and aspartate 103. Glutamate 104 is an active-site residue.

The protein belongs to the DNA polymerase type-Y family. Monomer. Mg(2+) serves as cofactor.

Its subcellular location is the cytoplasm. It carries out the reaction DNA(n) + a 2'-deoxyribonucleoside 5'-triphosphate = DNA(n+1) + diphosphate. Functionally, poorly processive, error-prone DNA polymerase involved in untargeted mutagenesis. Copies undamaged DNA at stalled replication forks, which arise in vivo from mismatched or misaligned primer ends. These misaligned primers can be extended by PolIV. Exhibits no 3'-5' exonuclease (proofreading) activity. May be involved in translesional synthesis, in conjunction with the beta clamp from PolIII. The protein is DNA polymerase IV of Pasteurella multocida (strain Pm70).